A 188-amino-acid polypeptide reads, in one-letter code: NADH-quinone oxidoreductase subunit B 1 (188 aa).

Residues Cys-39, Cys-40, Cys-105, and Cys-134 each contribute to the [4Fe-4S] cluster site.

The protein belongs to the complex I 20 kDa subunit family. As to quaternary structure, NDH-1 is composed of 14 different subunits. Subunits NuoB, C, D, E, F, and G constitute the peripheral sector of the complex. [4Fe-4S] cluster serves as cofactor.

The protein localises to the cell inner membrane. It carries out the reaction a quinone + NADH + 5 H(+)(in) = a quinol + NAD(+) + 4 H(+)(out). In terms of biological role, NDH-1 shuttles electrons from NADH, via FMN and iron-sulfur (Fe-S) centers, to quinones in the respiratory chain. The immediate electron acceptor for the enzyme in this species is believed to be ubiquinone. Couples the redox reaction to proton translocation (for every two electrons transferred, four hydrogen ions are translocated across the cytoplasmic membrane), and thus conserves the redox energy in a proton gradient. The polypeptide is NADH-quinone oxidoreductase subunit B 1 (Solibacter usitatus (strain Ellin6076)).